An 812-amino-acid chain; its full sequence is MSRFFSRGYHYDTASSSEDEELLTSSEEELMSSSEEEVVSDDSFFNDSESESAESDDDSDGKPYGPDWFKKPQFRKGGAPGGSGASRFLKGNADSSDESDDEGKKVVKSARDKLLDELNNTYNKIDAAEMTQDWTTILSEFESATKLLVKAQQQNMGTPNVFVRVVAQVEDLVAETSQAEIKNKIVAKAYNTVKQRVRKIARENEELLAKFRQHPEAFEKDSTVEFGQARDFDASDLTLMGRKVADRSAIVSSPSDFFSALRIVIDSRGKKGTDIQAQIKTMEELVSISKSPYESIIAYLNLIPIRFDACANLAYQPLEQWKASHNNVTSLLELLEANIESYHVTELAPRNEFIEEEPQPNENGVRMILGSVFTFVERLDDEFNKSLLNTDPHSSDYLDRLRDEQSVYNLILRSQLYLEKVLPEDTASKHLCRSFVRRLDHIYYKTSKLVDIVERAAWASVPANSSSKYITYSDDPDYNFKLVNTLCTVVSSEQEMLKRRATLYQIYYYALNNQFSKAKEMLVQSNVRNSINSQDPTIQILFNRVVVQLGLAAFKLCLVEDCHQILNEVSTASHLRDIMGQQSLQRVSNNISSNGTVTPTEMLCLPFHQHINLDLIDAVFMTCSLLIEIPHMAAFYSGIKVKRIPYSQKSIRRALEHYEKSSFQGPPETLRDHVIHAAKAMQRGNWAQCINYLRSISTWTLLGDKMEKVLEQLAERIQIESLKTYIFTYKRFYTKLSVQKLSELFSLPTEQVISVIQTLENTINIKGSLNEAKEMLIFDKGDEITKLEEVAIKLTKETKYQSERLNNVSQRQ.

The disordered stretch occupies residues 1 to 105 (MSRFFSRGYH…SDESDDEGKK (105 aa)). Acidic residues-rich tracts occupy residues 17–40 (SEDE…EVVS) and 48–59 (SESESAESDDDS). The region spanning 607–783 (FHQHINLDLI…EMLIFDKGDE (177 aa)) is the PCI domain.

The protein belongs to the eIF-3 subunit C family. In terms of assembly, component of the eukaryotic translation initiation factor 3 (eIF-3) complex.

It localises to the cytoplasm. In terms of biological role, component of the eukaryotic translation initiation factor 3 (eIF-3) complex, which is involved in protein synthesis of a specialized repertoire of mRNAs and, together with other initiation factors, stimulates binding of mRNA and methionyl-tRNAi to the 40S ribosome. The eIF-3 complex specifically targets and initiates translation of a subset of mRNAs involved in cell proliferation. The sequence is that of Eukaryotic translation initiation factor 3 subunit C from Eremothecium gossypii (strain ATCC 10895 / CBS 109.51 / FGSC 9923 / NRRL Y-1056) (Yeast).